Here is a 192-residue protein sequence, read N- to C-terminus: MNITSADFFCSYSSLNGLPSDGRPEIVFVGRSNVGKSSLLNSLCARKGLAKTSSTPGKTRLINYFLINENLYFVDLPGYGYAKVGHGERESWGKLLTDYVVKRDEIALVVLLVDARHPGMGSDREMMEFLDYCGRPFGIVLTKWDKLKQAEKSKARRTIESCASNARFIVNYSSLSGAGRDKLLERLDLFSQ.

The region spanning 22-192 (GRPEIVFVGR…LLERLDLFSQ (171 aa)) is the EngB-type G domain. GTP-binding positions include 30 to 37 (GRSNVGKS), 57 to 61 (GKTRL), 75 to 78 (DLPG), 142 to 145 (TKWD), and 172 to 174 (YSS). Serine 37 and threonine 59 together coordinate Mg(2+).

Belongs to the TRAFAC class TrmE-Era-EngA-EngB-Septin-like GTPase superfamily. EngB GTPase family. Mg(2+) serves as cofactor.

Functionally, necessary for normal cell division and for the maintenance of normal septation. The polypeptide is Probable GTP-binding protein EngB (Chlorobaculum parvum (strain DSM 263 / NCIMB 8327) (Chlorobium vibrioforme subsp. thiosulfatophilum)).